The chain runs to 353 residues: Protein MGF 360-13L (353 aa).

It belongs to the asfivirus MGF 360 family.

Its function is as follows. Plays a role in virus cell tropism, and may be required for efficient virus replication in macrophages. The chain is Protein MGF 360-13L from Ornithodoros (relapsing fever ticks).